A 109-amino-acid chain; its full sequence is Phycoerythrin alpha-1 subunit (109 aa).

(2R,3E)-phycocyanobilin contacts are provided by valine 6, alanine 16, phenylalanine 17, proline 20, aspartate 27, alanine 28, and alanine 39.

This sequence belongs to the phycoerythrin family. As to quaternary structure, heterotetramer of 2 identical alpha chains and 2 identical beta chains which form 2 alpha-beta heterodimers within the heterotetramer. The two alpha-beta heterodimers are rotated to an open configuration in contrast to the closed configuration found in other cryptophyte species due to the insertion of a single amino acid, Asp-65, in a conserved region of the alpha chain. In the open form, the central chromophores are not in physical contact but are separated by a water-filled channel. Post-translationally, contains three phycocyanobilin chromophores with binding mediated by both the alpha and beta subunits.

It localises to the plastid. The protein localises to the chloroplast thylakoid membrane. In terms of biological role, light-harvesting photosynthetic tetrapyrrole chromophore-protein from the phycobiliprotein complex. This chain is Phycoerythrin alpha-1 subunit, found in Hemiselmis virescens.